The following is a 144-amino-acid chain: Large ribosomal subunit protein uL13 (144 aa).

Belongs to the universal ribosomal protein uL13 family. Part of the 50S ribosomal subunit.

In terms of biological role, this protein is one of the early assembly proteins of the 50S ribosomal subunit, although it is not seen to bind rRNA by itself. It is important during the early stages of 50S assembly. The chain is Large ribosomal subunit protein uL13 from Desulfovibrio desulfuricans (strain ATCC 27774 / DSM 6949 / MB).